The primary structure comprises 535 residues: Major glycerophosphoinositol permease GIT3 (535 aa).

The chain crosses the membrane as a helical span at residues Val49–Phe69. Asn75 carries an N-linked (GlcNAc...) asparagine glycan. 5 helical membrane-spanning segments follow: residues Asn101–Ser121, Leu137–Phe157, Phe165–Phe185, Ala204–Phe224, and Leu232–Leu252. An N-linked (GlcNAc...) asparagine glycan is attached at Asn256. 6 consecutive transmembrane segments (helical) span residues Trp275 to Ile295, Trp324 to Ser344, Leu352 to Leu372, His378 to Gly398, Gly419 to Ile439, and Val455 to Cys475. Asn532 is a glycosylation site (N-linked (GlcNAc...) asparagine).

The protein belongs to the major facilitator superfamily. Sugar transporter (TC 2.A.1.1) family.

It is found in the cell membrane. The enzyme catalyses sn-glycerol 3-phosphocholine(out) = sn-glycerol 3-phosphocholine(in). Its function is as follows. Glycerophosphodiester transporter that mediates uptake of glycerophosphocholine (GroPCho) with GIT4. GIT3 acts as the major GroPCho permease. Does not possess detectable glycerophosphoinositol (GroPIns) transport activity. The expanded ability to utilize GroPIns and GroPCho results from the organism's pathogenic nature and its need to occupy a variety of environments within its host organism. This possibility is buttressed by the fact that GroPIns and GroPCho are present and abundant in human fluids. The polypeptide is Major glycerophosphoinositol permease GIT3 (Candida albicans (strain SC5314 / ATCC MYA-2876) (Yeast)).